The sequence spans 309 residues: 4-diphosphocytidyl-2-C-methyl-D-erythritol kinase (309 aa).

Residue K11 is part of the active site. ATP is bound at residue 94–104; sequence PVAAGLAGGSA. D136 is a catalytic residue.

It belongs to the GHMP kinase family. IspE subfamily.

It carries out the reaction 4-CDP-2-C-methyl-D-erythritol + ATP = 4-CDP-2-C-methyl-D-erythritol 2-phosphate + ADP + H(+). Its pathway is isoprenoid biosynthesis; isopentenyl diphosphate biosynthesis via DXP pathway; isopentenyl diphosphate from 1-deoxy-D-xylulose 5-phosphate: step 3/6. Functionally, catalyzes the phosphorylation of the position 2 hydroxy group of 4-diphosphocytidyl-2C-methyl-D-erythritol. This chain is 4-diphosphocytidyl-2-C-methyl-D-erythritol kinase, found in Synechococcus sp. (strain JA-3-3Ab) (Cyanobacteria bacterium Yellowstone A-Prime).